The primary structure comprises 449 residues: CCA-adding enzyme (449 aa).

Residues Ser-53 and Lys-56 each coordinate ATP. 2 residues coordinate CTP: Ser-53 and Lys-56. Asp-65, Asp-67, and Asp-119 together coordinate Mg(2+). His-142, Lys-161, and Tyr-170 together coordinate ATP. Residues His-142, Lys-161, and Tyr-170 each coordinate CTP.

Belongs to the tRNA nucleotidyltransferase/poly(A) polymerase family. Archaeal CCA-adding enzyme subfamily. In terms of assembly, homodimer. The cofactor is Mg(2+).

It catalyses the reaction a tRNA precursor + 2 CTP + ATP = a tRNA with a 3' CCA end + 3 diphosphate. The catalysed reaction is a tRNA with a 3' CCA end + 2 CTP + ATP = a tRNA with a 3' CCACCA end + 3 diphosphate. Catalyzes the addition and repair of the essential 3'-terminal CCA sequence in tRNAs without using a nucleic acid template. Adds these three nucleotides in the order of C, C, and A to the tRNA nucleotide-73, using CTP and ATP as substrates and producing inorganic pyrophosphate. tRNA 3'-terminal CCA addition is required both for tRNA processing and repair. Also involved in tRNA surveillance by mediating tandem CCA addition to generate a CCACCA at the 3' terminus of unstable tRNAs. While stable tRNAs receive only 3'-terminal CCA, unstable tRNAs are marked with CCACCA and rapidly degraded. The sequence is that of CCA-adding enzyme from Pyrococcus horikoshii (strain ATCC 700860 / DSM 12428 / JCM 9974 / NBRC 100139 / OT-3).